Here is a 202-residue protein sequence, read N- to C-terminus: Imidazoleglycerol-phosphate dehydratase (202 aa).

The protein belongs to the imidazoleglycerol-phosphate dehydratase family.

The protein localises to the cytoplasm. The enzyme catalyses D-erythro-1-(imidazol-4-yl)glycerol 3-phosphate = 3-(imidazol-4-yl)-2-oxopropyl phosphate + H2O. Its pathway is amino-acid biosynthesis; L-histidine biosynthesis; L-histidine from 5-phospho-alpha-D-ribose 1-diphosphate: step 6/9. In Mycolicibacterium gilvum (strain PYR-GCK) (Mycobacterium gilvum (strain PYR-GCK)), this protein is Imidazoleglycerol-phosphate dehydratase.